Reading from the N-terminus, the 784-residue chain is 1-phosphatidylinositol 4,5-bisphosphate phosphodiesterase delta-3-A (784 aa).

Positions 1 to 25 (MLGRKKNPETVQTESKSVESKTHDP) are disordered. Positions 16-25 (KSVESKTHDP) are enriched in basic and acidic residues. The PH domain maps to 38-149 (LLMLQGSKMM…WVRGIRTLKD (112 aa)). Residues 48–78 (KVRSQRWRKDRRLKLLEDCVTVWCESSKTSR) form a substrate binding region. 3 consecutive EF-hand domains span residues 159–194 (KLDH…INID), 195–230 (LNEQ…MMRR), and 227–262 (MMRR…QGED). Positions 172, 174, 176, 178, 183, 208, 210, 212, 214, and 219 each coordinate Ca(2+). The PI-PLC X-box domain maps to 313-458 (QDMSKPLAHY…LKGRILLKGK (146 aa)). H328 is an active-site residue. The Ca(2+) site is built by N329, E358, and D360. H373 is a catalytic residue. E407 serves as a coordination point for Ca(2+). Residues K456 and K458 each contribute to the substrate site. A disordered region spans residues 473-498 (FTNSSDEESVAGGNKKESKKDLARSA). The span at 486 to 495 (NKKESKKDLA) shows a compositional bias: basic and acidic residues. Residues 506 to 621 (LSDLVVYCQS…GYVLKPEFLC (116 aa)) form the PI-PLC Y-box domain. Positions 534 and 561 each coordinate substrate. One can recognise a C2 domain in the interval 621-750 (CDPKSDFDPE…TGYRHVHLLK (130 aa)). Ca(2+) is bound by residues I664, D666, N690, D719, and D721.

It depends on Ca(2+) as a cofactor.

The protein localises to the membrane. The protein resides in the cytoplasm. It localises to the cleavage furrow. The enzyme catalyses a 1,2-diacyl-sn-glycero-3-phospho-(1D-myo-inositol-4,5-bisphosphate) + H2O = 1D-myo-inositol 1,4,5-trisphosphate + a 1,2-diacyl-sn-glycerol + H(+). Hydrolyzes the phosphatidylinositol 4,5-bisphosphate (PIP2) to generate 2 second messenger molecules diacylglycerol (DAG) and inositol 1,4,5-trisphosphate (IP3). DAG mediates the activation of protein kinase C (PKC), while IP3 releases Ca(2+) from intracellular stores. This chain is 1-phosphatidylinositol 4,5-bisphosphate phosphodiesterase delta-3-A (plcd3a), found in Danio rerio (Zebrafish).